Consider the following 350-residue polypeptide: Protein SGT1 homolog A (350 aa).

TPR repeat units follow at residues 2-35 (AKELADKAKEAFVDDDFDVAVDLYSKAIDLDPNC), 37-69 (EFFADRAQAYIKLESFTEAVADANKAIELDPSL), and 71-103 (KAYLRKGTACMKLEEYRTAKTALEKGASITPSE). Residues 149–238 (TAKYRHEYYQ…ADIITWASLE (90 aa)) form the CS domain. The region spanning 260 to 350 (AYPSSKKVKD…DGMELKKWEI (91 aa)) is the SGS domain.

Belongs to the SGT1 family. In terms of assembly, interacts with RAR1. Forms a ternary complex with RAR1 and barley HSP90.

Functions in R gene-mediated resistance, but participates in a lower extent than SGT1B to RPP5-mediated resistance. Not required for RPM1, RPS2, RPS4 and RPS5-mediated resistance. Probably required for SCF-mediated ubiquitination, by coupling HSP90 to SCF complex for ubiquitination of HSP90 client proteins. In Arabidopsis thaliana (Mouse-ear cress), this protein is Protein SGT1 homolog A (SGT1A).